A 156-amino-acid chain; its full sequence is MKKVRLTREGYEKLKKELEDLKRKFMYEISERIKEARELGDLSENSEYEAAKNEQGRVGSRIMEIEQILSNAEIIEDSEESDEVTLGKWVVIKNLDTGEEHKFRIVTPQEADFFAQKLSSDSPLGKSLLGRKVGDVVKVKAPSGVQRYQVIAVMNK.

Positions 1–32 (MKKVRLTREGYEKLKKELEDLKRKFMYEISER) form a coiled coil.

This sequence belongs to the GreA/GreB family.

Its function is as follows. Necessary for efficient RNA polymerase transcription elongation past template-encoded arresting sites. The arresting sites in DNA have the property of trapping a certain fraction of elongating RNA polymerases that pass through, resulting in locked ternary complexes. Cleavage of the nascent transcript by cleavage factors such as GreA or GreB allows the resumption of elongation from the new 3'terminus. GreA releases sequences of 2 to 3 nucleotides. This chain is Transcription elongation factor GreA, found in Thermotoga maritima (strain ATCC 43589 / DSM 3109 / JCM 10099 / NBRC 100826 / MSB8).